We begin with the raw amino-acid sequence, 109 residues long: Flagellar hook-basal body complex protein FliE (109 aa).

Belongs to the FliE family.

It localises to the bacterial flagellum basal body. The sequence is that of Flagellar hook-basal body complex protein FliE from Pseudomonas savastanoi pv. phaseolicola (strain 1448A / Race 6) (Pseudomonas syringae pv. phaseolicola (strain 1448A / Race 6)).